Consider the following 422-residue polypeptide: Aliphatic (R)-hydroxynitrile lyase (422 aa).

Positions 63, 85, 115, 118, 121, 129, and 199 each coordinate Zn(2+).

The protein belongs to the zinc-containing alcohol dehydrogenase family. In terms of assembly, homodimer. Requires Zn(2+) as cofactor.

The enzyme catalyses (2R)-2-hydroxy-2-methylbutanenitrile = butan-2-one + hydrogen cyanide. Involved in the catabolism of cyanogenic glycosides. Naturally occurring substrates are the aliphatic acetone cyanohydrin and butan-2-one cyanohydrin, which are the aglycones of the cyanogenic glycosides linamarin, lotaustralin, linustatin and neolinustatin. Can use various aliphatic ketones and aldehydes as substrates, but not aromatic ketones. The polypeptide is Aliphatic (R)-hydroxynitrile lyase (Linum usitatissimum (Flax)).